The following is a 110-amino-acid chain: Flagellar hook-basal body complex protein FliE (110 aa).

This sequence belongs to the FliE family.

It localises to the bacterial flagellum basal body. This Pseudomonas putida (strain W619) protein is Flagellar hook-basal body complex protein FliE.